We begin with the raw amino-acid sequence, 328 residues long: Biotin synthase (328 aa).

Residues 50 to 277 form the Radical SAM core domain; the sequence is FGDQVHLCCI…GKEIVICGGR (228 aa). [4Fe-4S] cluster-binding residues include C67, C71, and C74. S111, C142, and C202 together coordinate [2Fe-2S] cluster.

Belongs to the radical SAM superfamily. Biotin synthase family. In terms of assembly, homodimer. The cofactor is [4Fe-4S] cluster. [2Fe-2S] cluster is required as a cofactor.

The enzyme catalyses (4R,5S)-dethiobiotin + (sulfur carrier)-SH + 2 reduced [2Fe-2S]-[ferredoxin] + 2 S-adenosyl-L-methionine = (sulfur carrier)-H + biotin + 2 5'-deoxyadenosine + 2 L-methionine + 2 oxidized [2Fe-2S]-[ferredoxin]. The protein operates within cofactor biosynthesis; biotin biosynthesis; biotin from 7,8-diaminononanoate: step 2/2. Functionally, catalyzes the conversion of dethiobiotin (DTB) to biotin by the insertion of a sulfur atom into dethiobiotin via a radical-based mechanism. This is Biotin synthase from Desulfatibacillum aliphaticivorans.